A 299-amino-acid polypeptide reads, in one-letter code: tRNA pseudouridine synthase B (299 aa).

The Nucleophile role is filled by aspartate 39.

This sequence belongs to the pseudouridine synthase TruB family. Type 1 subfamily.

The catalysed reaction is uridine(55) in tRNA = pseudouridine(55) in tRNA. Its function is as follows. Responsible for synthesis of pseudouridine from uracil-55 in the psi GC loop of transfer RNAs. The polypeptide is tRNA pseudouridine synthase B (Syntrophomonas wolfei subsp. wolfei (strain DSM 2245B / Goettingen)).